We begin with the raw amino-acid sequence, 169 residues long: Calfumirin-1 (169 aa).

4 EF-hand domains span residues 6-41 (NIVEEVQKMLDTYDTNKDGEITKAEAVEYFKGKKAF), 42-77 (NPERSAIYLFQVYDKDNDGKITIKELAGDIDFDKAL), 93-128 (EVEEDIEAFILRHNKDDNTDITKDELIQGFKETGAK), and 129-164 (DPEKSANFILTEMDTNKDGTITVKELRVYYQKVQKL). Ca(2+) contacts are provided by Asp19, Asn21, Asp23, Glu25, Glu30, Asp55, Asp57, Asp59, Lys61, Glu66, Asp108, Asn110, Asp112, Glu117, Asp142, Asn144, Asp146, Thr148, and Glu153.

Functionally, may be involved in the phase-shift of cells from growth to differentiation. The protein is Calfumirin-1 (cafA) of Dictyostelium discoideum (Social amoeba).